Consider the following 403-residue polypeptide: Malate dehydrogenase, chloroplastic (403 aa).

Residues M1–N80 constitute a chloroplast transit peptide. NAD(+) is bound by residues G89 to G95 and D115. Substrate-binding residues include R162 and R168. Residues N175 and I198–N200 contribute to the NAD(+) site. Residues N200 and R234 each coordinate substrate. H258 (proton acceptor) is an active-site residue. NAD(+) is bound at residue M309.

Belongs to the LDH/MDH superfamily. MDH type 1 family. As to quaternary structure, homodimer. Expressed in rosette leaves. Expressed in meristematic regions of roots and shoots, cotyledons, young leaves, trichomes, stamen, pollen, tapetum, gynoecium and ovules.

Its subcellular location is the plastid. The protein resides in the chloroplast stroma. The catalysed reaction is (S)-malate + NAD(+) = oxaloacetate + NADH + H(+). In terms of biological role, catalyzes a reversible NAD-dependent dehydrogenase reaction involved in central metabolism and redox homeostasis between organelle compartments. Plays a key role in the metabolism of dark chloroplasts and non-green plastids. Essential for embryo viability. Plays an essential role in heterotrophic metabolism in embryos, and autotrophic metabolism in photosynthetic tissues as well. The protein is Malate dehydrogenase, chloroplastic of Arabidopsis thaliana (Mouse-ear cress).